The chain runs to 364 residues: tRNA 2-selenouridine synthase (364 aa).

Positions 15–138 (FVNDTPLMDM…LRRFLIETID (124 aa)) constitute a Rhodanese domain. Residue cysteine 98 is the S-selanylcysteine intermediate of the active site.

The protein belongs to the SelU family. Monomer.

It catalyses the reaction 5-methylaminomethyl-2-thiouridine(34) in tRNA + selenophosphate + (2E)-geranyl diphosphate + H2O + H(+) = 5-methylaminomethyl-2-selenouridine(34) in tRNA + (2E)-thiogeraniol + phosphate + diphosphate. The enzyme catalyses 5-methylaminomethyl-2-thiouridine(34) in tRNA + (2E)-geranyl diphosphate = 5-methylaminomethyl-S-(2E)-geranyl-thiouridine(34) in tRNA + diphosphate. The catalysed reaction is 5-methylaminomethyl-S-(2E)-geranyl-thiouridine(34) in tRNA + selenophosphate + H(+) = 5-methylaminomethyl-2-(Se-phospho)selenouridine(34) in tRNA + (2E)-thiogeraniol. It carries out the reaction 5-methylaminomethyl-2-(Se-phospho)selenouridine(34) in tRNA + H2O = 5-methylaminomethyl-2-selenouridine(34) in tRNA + phosphate. Involved in the post-transcriptional modification of the uridine at the wobble position (U34) of tRNA(Lys), tRNA(Glu) and tRNA(Gln). Catalyzes the conversion of 2-thiouridine (S2U-RNA) to 2-selenouridine (Se2U-RNA). Acts in a two-step process involving geranylation of 2-thiouridine (S2U) to S-geranyl-2-thiouridine (geS2U) and subsequent selenation of the latter derivative to 2-selenouridine (Se2U) in the tRNA chain. The chain is tRNA 2-selenouridine synthase from Photobacterium profundum (strain SS9).